A 559-amino-acid polypeptide reads, in one-letter code: MTTPSKFRDIEIRAPRGTTLTAKSWLTEAPLRMLMNNLDPEVAENPRELVVYGGIGRAARNWECYDRIVETLKQLNDDETLLVQSGKPVGVFKTHANAPRVLIANSNLVPHWATWEHFNELDAKGLAMYGQMTAGSWIYIGSQGIVQGTYETFVEAGRQHYDGNLKGRWVLTAGLGGMGGAQPLAATLAGACSLNIECQQSRIDFRLRSRYVDEQAKDLDDALARIQRYTAEGKAISIALLGNAAEILPELVRRGVRPDMVTDQTSAHDPLNGYLPAGWSWEEYRDRAQTDPAAVVKAAKQSMAVHVRAMLAFQQQGVPTFDYGNNIRQMAKEEGVANAFDFPGFVPAYIRPLFCRGIGPFRWAALSGDPQDIYKTDAKVKQLIPDDAHLHRWLDMARERISFQGLPARICWVGLGLRAKLGLAFNEMVRTGELSAPIVIGRDHLDSGSVASPNRETEAMQDGSDAVSDWPLLNALLNTASGATWVSLHHGGGVGMGFSQHSGMVIVCDGSDEAAERIARVLTNDPGTGVMRHADAGYQVAIDCAKEQGLNLPMITAQR.

Residues 53-54 (GG), Gln-131, 177-179 (GMG), Glu-197, Arg-202, 243-244 (NA), 264-268 (QTSAH), 274-275 (YL), and Tyr-323 each bind NAD(+). Cys-411 is an active-site residue. Position 493 (Gly-493) interacts with NAD(+).

The protein belongs to the urocanase family. It depends on NAD(+) as a cofactor.

The protein resides in the cytoplasm. The catalysed reaction is 4-imidazolone-5-propanoate = trans-urocanate + H2O. The protein operates within amino-acid degradation; L-histidine degradation into L-glutamate; N-formimidoyl-L-glutamate from L-histidine: step 2/3. Its function is as follows. Catalyzes the conversion of urocanate to 4-imidazolone-5-propionate. This chain is Urocanate hydratase, found in Pseudomonas aeruginosa (strain ATCC 15692 / DSM 22644 / CIP 104116 / JCM 14847 / LMG 12228 / 1C / PRS 101 / PAO1).